Consider the following 529-residue polypeptide: Low affinity inorganic phosphate transporter 4 (529 aa).

The Cytoplasmic segment spans residues 1-21 (MASDNLVVLNALDTARTQWYH). Residues 22–42 (VTAVIIAGMGFFTDAYDLFCI) traverse the membrane as a helical segment. At 43 to 71 (STVSKLLGRLYYYDPSTKAPGKLPHMANN) the chain is on the extracellular side. Residues 72–92 (WVIGVALVGTLSGQLVFGWLG) traverse the membrane as a helical segment. Topologically, residues 93–99 (DKLGRKK) are cytoplasmic. A helical membrane pass occupies residues 100–120 (VYGLTLILMVICALCSGLSLG). Topologically, residues 121 to 125 (YSPKS) are extracellular. Residues 126-146 (VIGTLCFFRFWLGFGIGGDYP) traverse the membrane as a helical segment. Over 147 to 161 (LSATIMSEYANKSTR) the chain is Cytoplasmic. The helical transmembrane segment at 162-182 (GAFIAAVFAMQGVGIIFAGLV) threads the bilayer. Residues 183-211 (SMTISKVFLMNFEGKPFNVDEVLSTEPEA) lie on the Extracellular side of the membrane. A helical transmembrane segment spans residues 212 to 232 (DYVWRIVLMLGALPALLTYYW). Over 233–291 (RMKMPETGRYTAIIEGNAKQAAIDMGKVLDIEIQAEGDKLAQFKAANEYSLLSNEFFQR) the chain is Cytoplasmic. A helical transmembrane segment spans residues 292-312 (HGLHLIGTMSTWFLLDIAFYS). At 313–344 (QNLTQKDIFPVMGLTSKANTISALREMFETSR) the chain is on the extracellular side. Residue N314 is glycosylated (N-linked (GlcNAc...) asparagine). A helical transmembrane segment spans residues 345 to 365 (AMFVIALFGTFPGYWFTVFFI). Residues 366–374 (EKIGRFKIQ) are Cytoplasmic-facing. A helical transmembrane segment spans residues 375 to 395 (LVGFFMMSVFMAIIGVKYDYL). Residues 396–405 (RNKEHKWTFA) are Extracellular-facing. The chain crosses the membrane as a helical span at residues 406-426 (ALYGLTFFFANFGPNSTTFVL). Over 427–437 (PAELFPTRVRS) the chain is Cytoplasmic. A helical transmembrane segment spans residues 438 to 458 (TCHALSAALGKAGAMISAFGI). The Extracellular segment spans residues 459-471 (QQYTQDQDVRKIK). A helical membrane pass occupies residues 472-492 (TAMLLLAFTNMVGFCCTFLVT). Over 493–529 (ETKGRSLEEISGEDGRQNETQMKTTRPVSGHPDDGWE) the chain is Cytoplasmic. Residues 501–529 (EISGEDGRQNETQMKTTRPVSGHPDDGWE) are disordered. The span at 510-519 (NETQMKTTRP) shows a compositional bias: polar residues.

The protein belongs to the major facilitator superfamily. Phosphate:H(+) symporter (TC 2.A.1.9) family.

The protein localises to the cell membrane. The enzyme catalyses phosphate(in) + H(+)(in) = phosphate(out) + H(+)(out). In terms of biological role, low-affinity transporter for external inorganic phosphate (Pi) probably involved in the acquisition of phosphate released by arbuscular mycorrhizal (AM) fungi (e.g. Rhizophagus irregularis and Glomus intraradices) during AM symbiosis. Acts as a Pi-sensing machinery at the root tip level, independently of AM fungi, involved in the regulation of early root branching and lateral roots formation. This is Low affinity inorganic phosphate transporter 4 from Petunia hybrida (Petunia).